A 326-amino-acid polypeptide reads, in one-letter code: Glyoxylate/hydroxypyruvate reductase B (326 aa).

Residues Arg237 and Glu266 contribute to the active site. His285 serves as the catalytic Proton donor.

This sequence belongs to the D-isomer specific 2-hydroxyacid dehydrogenase family. GhrB subfamily. Homodimer.

The protein resides in the cytoplasm. It catalyses the reaction glycolate + NADP(+) = glyoxylate + NADPH + H(+). The enzyme catalyses (R)-glycerate + NAD(+) = 3-hydroxypyruvate + NADH + H(+). The catalysed reaction is (R)-glycerate + NADP(+) = 3-hydroxypyruvate + NADPH + H(+). In terms of biological role, catalyzes the NADPH-dependent reduction of glyoxylate and hydroxypyruvate into glycolate and glycerate, respectively. The chain is Glyoxylate/hydroxypyruvate reductase B from Yersinia pseudotuberculosis serotype O:3 (strain YPIII).